Consider the following 603-residue polypeptide: Aspartate--tRNA(Asp/Asn) ligase (603 aa).

Glu172 contacts L-aspartate. The segment at 196–199 is aspartate; it reads QLFK. L-aspartate is bound at residue Arg218. Residues 218 to 220 and Gln227 each bind ATP; that span reads RDE. Residue His457 participates in L-aspartate binding. Residue Glu491 coordinates ATP. Arg498 is an L-aspartate binding site. 543-546 contacts ATP; it reads GLDR.

It belongs to the class-II aminoacyl-tRNA synthetase family. Type 1 subfamily. In terms of assembly, homodimer.

Its subcellular location is the cytoplasm. The enzyme catalyses tRNA(Asx) + L-aspartate + ATP = L-aspartyl-tRNA(Asx) + AMP + diphosphate. Its function is as follows. Aspartyl-tRNA synthetase with relaxed tRNA specificity since it is able to aspartylate not only its cognate tRNA(Asp) but also tRNA(Asn). Reaction proceeds in two steps: L-aspartate is first activated by ATP to form Asp-AMP and then transferred to the acceptor end of tRNA(Asp/Asn). The sequence is that of Aspartate--tRNA(Asp/Asn) ligase from Laribacter hongkongensis (strain HLHK9).